A 154-amino-acid polypeptide reads, in one-letter code: Protein X (154 aa).

The segment at 68–117 (PCALRFTSARRMETTVNAPQSLPTPLHKRTLGLSPRSTTWIEEYIKDCVF) is mitochondrial targeting sequence.

Belongs to the orthohepadnavirus protein X family. In terms of assembly, may form homodimer. May interact with host CEBPA, CFLAR, CREB1, DDB1, E4F1, HBXIP, HSPD1/HSP60, NFKBIA, POLR2E and SMAD4. Interacts with host SMC5-SMC6 complex and induces its degradation. Interacts with host TRPC4AP; leading to prevent ubiquitination of TRPC4AP. Interacts with host PLSCR1; this interaction promotes ubiquitination and degradation of HBx and impairs HBx-mediated cell proliferation. A fraction may be phosphorylated in insect cells and HepG2 cells, a human hepatoblastoma cell line. Phosphorylated in vitro by host protein kinase C or mitogen-activated protein kinase. N-acetylated in insect cells.

Its subcellular location is the host cytoplasm. The protein resides in the host nucleus. It is found in the host mitochondrion. Its function is as follows. Multifunctional protein that plays a role in silencing host antiviral defenses and promoting viral transcription. Does not seem to be essential for HBV infection. May be directly involved in development of cirrhosis and liver cancer (hepatocellular carcinoma). Most of cytosolic activities involve modulation of cytosolic calcium. The effect on apoptosis is controversial depending on the cell types in which the studies have been conducted. May induce apoptosis by localizing in mitochondria and causing loss of mitochondrial membrane potential. May also modulate apoptosis by binding host CFLAR, a key regulator of the death-inducing signaling complex (DISC). Promotes viral transcription by using the host E3 ubiquitin ligase DDB1 to target the SMC5-SMC6 complex to proteasomal degradation. This host complex would otherwise bind to viral episomal DNA, and prevents its transcription. Moderately stimulates transcription of many different viral and cellular transcription elements. Promoters and enhancers stimulated by HBx contain DNA binding sites for NF-kappa-B, AP-1, AP-2, c-EBP, ATF/CREB, or the calcium-activated factor NF-AT. This Homo sapiens (Human) protein is Protein X.